Reading from the N-terminus, the 159-residue chain is uncharacterized protein (159 aa).

3 helical membrane-spanning segments follow: residues 17–37, 44–64, and 67–87; these read FFFF…NLSS, WLIV…PLPI, and FSGA…DLIA.

The protein resides in the membrane. This is an uncharacterized protein from Saccharomyces cerevisiae (strain ATCC 204508 / S288c) (Baker's yeast).